A 450-amino-acid polypeptide reads, in one-letter code: Homogentisate 1,2-dioxygenase (450 aa).

Catalysis depends on His-304, which acts as the Proton acceptor. The Fe cation site is built by His-347 and Glu-353. Tyr-362 and His-383 together coordinate homogentisate. Residue His-383 participates in Fe cation binding.

This sequence belongs to the homogentisate dioxygenase family. Hexamer; dimer of trimers. Fe cation serves as cofactor.

It catalyses the reaction homogentisate + O2 = 4-maleylacetoacetate + H(+). It participates in amino-acid degradation; L-phenylalanine degradation; acetoacetate and fumarate from L-phenylalanine: step 4/6. Its function is as follows. Involved in the catabolism of homogentisate (2,5-dihydroxyphenylacetate or 2,5-OH-PhAc), a central intermediate in the degradation of phenylalanine and tyrosine. Catalyzes the oxidative ring cleavage of the aromatic ring of homogentisate to yield maleylacetoacetate. This Burkholderia mallei (strain NCTC 10229) protein is Homogentisate 1,2-dioxygenase.